The chain runs to 1264 residues: Ubiquitin carboxyl-terminal hydrolase usp-48 (1264 aa).

In terms of domain architecture, USP spans 108–430 (AGLINGGNFC…ACYGLLYRRR (323 aa)). The Nucleophile role is filled by cysteine 117. Histidine 366 acts as the Proton acceptor in catalysis. Disordered stretches follow at residues 390–415 (IPKP…KEKY), 522–610 (AKGE…IMDT), and 630–679 (TVEV…PVSS). Basic and acidic residues-rich tracts occupy residues 403–415 (KTEK…KEKY) and 532–543 (EASENEEKKKNE). Positions 516-547 (AQEYEVAKGEKKKKKKEASENEEKKKNEEDEA) form a coiled coil. Positions 565–575 (SEPSTSAAATE) are enriched in low complexity. Polar residues-rich tracts occupy residues 587 to 599 (ETPN…STQV) and 663 to 678 (NGTN…QPVS).

This sequence belongs to the peptidase C19 family. In terms of tissue distribution, broadly expressed. Expressed in germline.

It localises to the nucleus. Its subcellular location is the chromosome. The enzyme catalyses Thiol-dependent hydrolysis of ester, thioester, amide, peptide and isopeptide bonds formed by the C-terminal Gly of ubiquitin (a 76-residue protein attached to proteins as an intracellular targeting signal).. Functionally, recognizes and hydrolyzes the peptide bond at the C-terminal Gly of ubiquitin. Involved in the processing of poly-ubiquitin precursors as well as that of ubiquitinated proteins. Required post-developmentally to restrict the plasticity of epidermal cells, probably by regulating gene expression. In Caenorhabditis elegans, this protein is Ubiquitin carboxyl-terminal hydrolase usp-48.